The following is a 329-amino-acid chain: Protein mlo2 (329 aa).

The segment at 33-104 (DTCTYSMGYL…HSIPCNLRKS (72 aa)) adopts a UBR-type zinc-finger fold. Residues 120–179 (GRFCICDTVYNPETEEGTMFQCILCEDWFHEKCLQKTNKGIAIPDAETFEWLVCSECSEK) form a PHD-type zinc finger.

Belongs to the UBR7 family.

Functionally, not known, interfere with mitotic chromosome segregation when overexpressed. In Schizosaccharomyces pombe (strain 972 / ATCC 24843) (Fission yeast), this protein is Protein mlo2 (mlo2).